A 582-amino-acid chain; its full sequence is Formate--tetrahydrofolate ligase (582 aa).

Residue 65–72 coordinates ATP; it reads TPLGEGKT.

Belongs to the formate--tetrahydrofolate ligase family.

It catalyses the reaction (6S)-5,6,7,8-tetrahydrofolate + formate + ATP = (6R)-10-formyltetrahydrofolate + ADP + phosphate. It participates in one-carbon metabolism; tetrahydrofolate interconversion. This Vibrio parahaemolyticus serotype O3:K6 (strain RIMD 2210633) protein is Formate--tetrahydrofolate ligase.